Here is a 148-residue protein sequence, read N- to C-terminus: Deoxyuridine 5'-triphosphate nucleotidohydrolase (148 aa).

Substrate contacts are provided by residues arginine 67 to glycine 69, asparagine 80, leucine 84 to aspartate 86, and methionine 94.

It belongs to the dUTPase family. Requires Mg(2+) as cofactor.

The catalysed reaction is dUTP + H2O = dUMP + diphosphate + H(+). The protein operates within pyrimidine metabolism; dUMP biosynthesis; dUMP from dCTP (dUTP route): step 2/2. In terms of biological role, this enzyme is involved in nucleotide metabolism: it produces dUMP, the immediate precursor of thymidine nucleotides and it decreases the intracellular concentration of dUTP so that uracil cannot be incorporated into DNA. The sequence is that of Deoxyuridine 5'-triphosphate nucleotidohydrolase from Paraburkholderia phytofirmans (strain DSM 17436 / LMG 22146 / PsJN) (Burkholderia phytofirmans).